Consider the following 50-residue polypeptide: Protein PsbN (50 aa).

Residues valine 14–phenylalanine 34 traverse the membrane as a helical segment.

The protein belongs to the PsbN family.

It is found in the cellular thylakoid membrane. Functionally, may play a role in photosystem I and II biogenesis. The protein is Protein PsbN of Prochlorococcus marinus (strain MIT 9515).